We begin with the raw amino-acid sequence, 634 residues long: Proline and serine-rich protein 3 (634 aa).

5 disordered regions span residues 1–69 (MFPK…LIDN), 81–142 (FRQA…TSLA), 185–242 (DASS…ATLK), 368–455 (VPPT…FEGP), and 472–534 (FPDS…TAPK). A compositionally biased stretch (polar residues) spans 15–24 (RTGATRSQRP). 3 stretches are compositionally biased toward low complexity: residues 40–56 (ESWPSSSWTPSPASTTE), 128–140 (VTGPSPTGVSSTS), and 185–202 (DASSSSFPISSDGLSPSS). Residues 203-215 (VTFNPDSNKSSNP) are compositionally biased toward polar residues. Residues 368–377 (VPPTSTSTTP) show a composition bias toward low complexity. A compositionally biased stretch (pro residues) spans 378-399 (APTPTPQVCIPGPPTSAPPPCA). Polar residues predominate over residues 436–448 (VSTSSHQKTTVPD). Positions 503–515 (PESRRGSKTESRK) are enriched in basic and acidic residues. Serine 588 bears the Phosphoserine mark.

The protein localises to the cytoplasm. Its subcellular location is the cytoskeleton. The protein resides in the microtubule organizing center. It localises to the centrosome. This is Proline and serine-rich protein 3 (Proser3) from Mus musculus (Mouse).